The following is a 1437-amino-acid chain: Protein CC2D2B (1437 aa).

This Homo sapiens (Human) protein is Protein CC2D2B.